A 1677-amino-acid polypeptide reads, in one-letter code: Vitellogenin (1677 aa).

Residues 1 to 8 (LTIALVGS) form the signal peptide. Positions 17–655 (FSGSKTYQYK…NAASILPSAV (639 aa)) constitute a Vitellogenin domain. 2 disordered regions span residues 1089-1232 (TLRG…SEEI) and 1252-1280 (FQNK…SKQD). The span at 1098–1122 (SSSSSSSSSSSSSSSSSSSSSSQQS) shows a compositional bias: low complexity. The segment covering 1123–1145 (RMEKRMEQDKLTENLERDRDHMR) has biased composition (basic and acidic residues). Residues 1169-1196 (SSSSSSSSSSSGSNSSSSSSSSSSSSSR) are compositionally biased toward low complexity. 4 N-linked (GlcNAc...) asparagine glycosylation sites follow: Asn-1182, Asn-1202, Asn-1217, and Asn-1218. The segment covering 1197–1212 (SHNHRNNTRTLSKSKR) has biased composition (basic residues). Low complexity-rich tracts occupy residues 1215–1229 (NNNN…SSSS) and 1260–1273 (SSSS…SSQS). Residues 1490 to 1675 (SKCVAQENKF…TATEAASFCV (186 aa)) enclose the VWFD domain. 2 disulfide bridges follow: Cys-1492–Cys-1631 and Cys-1515–Cys-1674. The span at 1636–1649 (GERRKEFRMPDGRQ) shows a compositional bias: basic and acidic residues. The segment at 1636–1659 (GERRKEFRMPDGRQARGPSVSPTP) is disordered.

Phosvitin, an egg yolk storage protein, is one of the most highly phosphorylated (10%) proteins in nature. In terms of tissue distribution, found in liver, testis and undifferentiated gonads of estrogen-treated fish. Not detected in the brain and spleen.

Functionally, precursor of the major egg-yolk proteins that are sources of nutrients during early development of oviparous organisms. This Acipenser transmontanus (White sturgeon) protein is Vitellogenin.